Consider the following 196-residue polypeptide: Leucyl/phenylalanyl-tRNA--protein transferase (196 aa).

It belongs to the L/F-transferase family.

The protein localises to the cytoplasm. The catalysed reaction is N-terminal L-lysyl-[protein] + L-leucyl-tRNA(Leu) = N-terminal L-leucyl-L-lysyl-[protein] + tRNA(Leu) + H(+). It catalyses the reaction N-terminal L-arginyl-[protein] + L-leucyl-tRNA(Leu) = N-terminal L-leucyl-L-arginyl-[protein] + tRNA(Leu) + H(+). The enzyme catalyses L-phenylalanyl-tRNA(Phe) + an N-terminal L-alpha-aminoacyl-[protein] = an N-terminal L-phenylalanyl-L-alpha-aminoacyl-[protein] + tRNA(Phe). Functionally, functions in the N-end rule pathway of protein degradation where it conjugates Leu, Phe and, less efficiently, Met from aminoacyl-tRNAs to the N-termini of proteins containing an N-terminal arginine or lysine. In Thermosynechococcus vestitus (strain NIES-2133 / IAM M-273 / BP-1), this protein is Leucyl/phenylalanyl-tRNA--protein transferase.